Here is a 669-residue protein sequence, read N- to C-terminus: PDF receptor (669 aa).

Residues 1-244 are Extracellular-facing; that stretch reads MTLLSNILDC…DIARRTRTLE (244 aa). The disordered stretch occupies residues 24 to 52; it reads RQSGSSGPSPSAPTAGTFESKSMLEPTSS. The segment covering 26 to 40 has biased composition (low complexity); the sequence is SGSSGPSPSAPTAGT. Residues asparagine 111, asparagine 117, asparagine 130, asparagine 137, asparagine 148, and asparagine 198 are each glycosylated (N-linked (GlcNAc...) asparagine). A helical transmembrane segment spans residues 245–265; the sequence is IVGLCLSLFALIVSLLIFCTF. Over 266 to 274 the chain is Cytoplasmic; that stretch reads RSLRNNRTK. A helical membrane pass occupies residues 275–295; it reads IHKNLFVAMVLQVIIRLTLYL. The Extracellular segment spans residues 296-334; the sequence is DQFRRGNKEAATNTSLSVIENTPYLCEASYVLLEYARTA. The N-linked (GlcNAc...) asparagine glycan is linked to asparagine 308. Residues 335 to 355 traverse the membrane as a helical segment; it reads MFMWMFIEGLYLHNMVTVAVF. Over 356–366 the chain is Cytoplasmic; the sequence is QGSFPLKFFSR. Residues 367–387 form a helical membrane-spanning segment; it reads LGWCVPILMTTVWARCTVMYM. The Extracellular portion of the chain corresponds to 388-411; sequence DTSLGECLWNYNLTPYYWILEGPR. Residues 412–432 form a helical membrane-spanning segment; it reads LAVILLNFCFLVNIIRVLVMK. The Cytoplasmic segment spans residues 433–449; sequence LRQSQASDIEQTRKAVR. The helical transmembrane segment at 450–470 threads the bilayer; sequence AAIVLLPLLGITNLLHQLAPL. Residues 471-480 are Extracellular-facing; that stretch reads KTATNFAVWS. The chain crosses the membrane as a helical span at residues 481–501; the sequence is YGTHFLTSFQGFFIALIYCFL. Residues 502-669 lie on the Cytoplasmic side of the membrane; the sequence is NGEVRAVLLK…ESVVFELSEQ (168 aa). Disordered stretches follow at residues 536–573 and 590–614; these read AYNTAPDTDAVQPAGDPSATGKRISPPNKRLNGRKPSS and PRLQNKAREKGKDRVEKTDAEAEPD. The segment covering 595 to 609 has biased composition (basic and acidic residues); it reads KAREKGKDRVEKTDA.

This sequence belongs to the G-protein coupled receptor 2 family. Mainly present in clock neurons of the brain. Localizes in all 4 s-LNv neurons, 1 LNd neuron, 7 DN1 neurons, and 1 DN3 neuron. In addition to the clock neurons, it is also present in approximately 13 pairs of neurons along the ventral nerve cord in third instar larvae, which do not overlap with dopaminergic or serotonergic neurons. Not present in DN2 neurons (at protein level).

The protein resides in the cell membrane. Receptor for PDF, a neuropeptide controlling circadian behavioral rhythms. Probably regulates circadian behavioral rhythms through coordination of activities of clock neurons. PDF-binding results in the elevation of cAMP synthesis. Plays a role in sleep regulation and regulates the state transition from sleep to wake. In Drosophila melanogaster (Fruit fly), this protein is PDF receptor.